The sequence spans 177 residues: Large ribosomal subunit protein uL10 (177 aa).

The protein belongs to the universal ribosomal protein uL10 family. As to quaternary structure, part of the ribosomal stalk of the 50S ribosomal subunit. The N-terminus interacts with L11 and the large rRNA to form the base of the stalk. The C-terminus forms an elongated spine to which L12 dimers bind in a sequential fashion forming a multimeric L10(L12)X complex.

Functionally, forms part of the ribosomal stalk, playing a central role in the interaction of the ribosome with GTP-bound translation factors. This is Large ribosomal subunit protein uL10 from Caldanaerobacter subterraneus subsp. tengcongensis (strain DSM 15242 / JCM 11007 / NBRC 100824 / MB4) (Thermoanaerobacter tengcongensis).